A 457-amino-acid chain; its full sequence is UDP-N-acetylmuramoyl-tripeptide--D-alanyl-D-alanine ligase (457 aa).

113–119 (GSNGKTT) lines the ATP pocket.

This sequence belongs to the MurCDEF family. MurF subfamily.

The protein resides in the cytoplasm. It carries out the reaction D-alanyl-D-alanine + UDP-N-acetyl-alpha-D-muramoyl-L-alanyl-gamma-D-glutamyl-meso-2,6-diaminopimelate + ATP = UDP-N-acetyl-alpha-D-muramoyl-L-alanyl-gamma-D-glutamyl-meso-2,6-diaminopimeloyl-D-alanyl-D-alanine + ADP + phosphate + H(+). The protein operates within cell wall biogenesis; peptidoglycan biosynthesis. In terms of biological role, involved in cell wall formation. Catalyzes the final step in the synthesis of UDP-N-acetylmuramoyl-pentapeptide, the precursor of murein. The chain is UDP-N-acetylmuramoyl-tripeptide--D-alanyl-D-alanine ligase from Bacillus subtilis (strain 168).